The sequence spans 194 residues: Imidazoleglycerol-phosphate dehydratase (194 aa).

The protein belongs to the imidazoleglycerol-phosphate dehydratase family.

It localises to the cytoplasm. The enzyme catalyses D-erythro-1-(imidazol-4-yl)glycerol 3-phosphate = 3-(imidazol-4-yl)-2-oxopropyl phosphate + H2O. It participates in amino-acid biosynthesis; L-histidine biosynthesis; L-histidine from 5-phospho-alpha-D-ribose 1-diphosphate: step 6/9. This Bacillus velezensis (strain DSM 23117 / BGSC 10A6 / LMG 26770 / FZB42) (Bacillus amyloliquefaciens subsp. plantarum) protein is Imidazoleglycerol-phosphate dehydratase.